The chain runs to 174 residues: Flavodoxin 1 (174 aa).

In terms of domain architecture, Flavodoxin-like spans 4–168 (IGIFYGSSSG…RLERWIAVLQ (165 aa)). FMN-binding positions include 10–14 (SSSGV) and 89–122 (LFGA…ALVG).

FMN is required as a cofactor.

Its function is as follows. Flavodoxins are low-potential electron donors to a number of redox enzymes. AvFld 1 is able to donate electrons to the assimilatory nitrate reductase of A.vinelandii to catalyze the reduction of nitrate to nitrite. The chain is Flavodoxin 1 from Azotobacter vinelandii (strain DJ / ATCC BAA-1303).